We begin with the raw amino-acid sequence, 123 residues long: Cholecystokinin A (123 aa).

An N-terminal signal peptide occupies residues 1–20; that stretch reads MYSGICICLLLAMLSASSKA. Residues 21–103 constitute a propeptide that is removed on maturation; sequence HQSEDAVVTE…FDQPHRINDR (83 aa). Y105 is modified (sulfotyrosine). Phenylalanine amide is present on F111. A propeptide spanning residues 115-123 is cleaved from the precursor; sequence SAEEYEYSS.

It belongs to the gastrin/cholecystokinin family. In terms of processing, the precursor is cleaved by proteases to produce a number of active cholecystokinins. As to expression, brain, gastrointestinal tract and lung.

It is found in the secreted. The protein is Cholecystokinin A (cck-a) of Xenopus laevis (African clawed frog).